The chain runs to 449 residues: Probable phosphoglucosamine mutase (449 aa).

The active-site Phosphoserine intermediate is the Ser101. Mg(2+) contacts are provided by Ser101, Asp239, Asp241, and Asp243. Ser101 carries the post-translational modification Phosphoserine.

This sequence belongs to the phosphohexose mutase family. Mg(2+) is required as a cofactor. Post-translationally, activated by phosphorylation.

It carries out the reaction alpha-D-glucosamine 1-phosphate = D-glucosamine 6-phosphate. Functionally, catalyzes the conversion of glucosamine-6-phosphate to glucosamine-1-phosphate. This is Probable phosphoglucosamine mutase from Methanothermobacter thermautotrophicus (strain ATCC 29096 / DSM 1053 / JCM 10044 / NBRC 100330 / Delta H) (Methanobacterium thermoautotrophicum).